A 501-amino-acid polypeptide reads, in one-letter code: Cytochrome P450 monooxygenase 76AD131 (501 aa).

Residues Met-1–Leu-21 traverse the membrane as a helical segment. 2 N-linked (GlcNAc...) asparagine glycosylation sites follow: Asn-115 and Asn-264. Cys-444 lines the heme pocket.

Belongs to the cytochrome P450 family. Requires heme as cofactor. In terms of tissue distribution, highly expressed in aerial parts, in both skin and flesh tissues.

The protein localises to the membrane. The catalysed reaction is tyramine + reduced [NADPH--hemoprotein reductase] + O2 = dopamine + oxidized [NADPH--hemoprotein reductase] + H2O + H(+). The enzyme catalyses 3-methoxytyramine + reduced [NADPH--hemoprotein reductase] + O2 = 3,4-dihydroxy-5-methoxyphenethylamine + oxidized [NADPH--hemoprotein reductase] + H2O + H(+). It functions in the pathway aromatic compound metabolism. Its pathway is alkaloid biosynthesis. Functionally, cytochrome P450 monooxygenase participating in the biosynthesis of natural products derived from phenylethylamine, including mescaline, a natural hallucinogen potentially used in psychotherapeutic treatments. Catalyzes the hydroxylation of tyramine to dopamine and of 3-methoxytyramine to 3,4-dihydroxy-5-methoxyphenethylamine. This chain is Cytochrome P450 monooxygenase 76AD131, found in Lophophora williamsii (Peyote).